Reading from the N-terminus, the 600-residue chain is NADH-quinone oxidoreductase subunit C/D (600 aa).

The tract at residues 1 to 190 is NADH dehydrogenase I subunit C; that stretch reads MIDLMPKKNT…EPFFLNEQKE (190 aa). Positions 214 to 600 are NADH dehydrogenase I subunit D; that stretch reads EFMFLNLGPN…IDFVMSDVDR (387 aa).

The protein in the N-terminal section; belongs to the complex I 30 kDa subunit family. It in the C-terminal section; belongs to the complex I 49 kDa subunit family. NDH-1 is composed of 13 different subunits. Subunits NuoB, CD, E, F, and G constitute the peripheral sector of the complex.

The protein localises to the cell membrane. The catalysed reaction is a quinone + NADH + 5 H(+)(in) = a quinol + NAD(+) + 4 H(+)(out). NDH-1 shuttles electrons from NADH, via FMN and iron-sulfur (Fe-S) centers, to quinones in the respiratory chain. The immediate electron acceptor for the enzyme in this species is believed to be ubiquinone. Couples the redox reaction to proton translocation (for every two electrons transferred, four hydrogen ions are translocated across the cytoplasmic membrane), and thus conserves the redox energy in a proton gradient. The chain is NADH-quinone oxidoreductase subunit C/D from Buchnera aphidicola subsp. Acyrthosiphon pisum (strain 5A).